The sequence spans 215 residues: Pyrrolidone-carboxylate peptidase (215 aa).

Residues Glu80, Cys143, and His167 contribute to the active site.

The protein belongs to the peptidase C15 family. Homotetramer.

The protein resides in the cytoplasm. The enzyme catalyses Release of an N-terminal pyroglutamyl group from a polypeptide, the second amino acid generally not being Pro.. Removes 5-oxoproline from various penultimate amino acid residues except L-proline. The chain is Pyrrolidone-carboxylate peptidase from Bacillus cereus (strain B4264).